We begin with the raw amino-acid sequence, 845 residues long: Putative DEAD-box ATP-dependent RNA helicase 29 (845 aa).

Positions 28-56 match the Q motif motif; sequence GGFESLNLGPNVFNAIKKKGYKVPTPIQR. Positions 59–232 constitute a Helicase ATP-binding domain; sequence MPLILSGVDV…KAGLREPQLV (174 aa). 72-79 contacts ATP; the sequence is ARTGSGKT. The DEAD box signature appears at 180–183; it reads DEAD. Residues 256 to 411 form the Helicase C-terminal domain; that stretch reads KYSALLYLVR…EVLKNMEEVM (156 aa). The interval 675–845 is disordered; that stretch reads SGKIKTESGA…GGGGKRGRGR (171 aa). Basic and acidic residues-rich tracts occupy residues 696-716 and 738-754; these read RWQE…DETT and VRSE…ERQQ. Over residues 770 to 799 the composition is skewed to gly residues; sequence GGRGGARGGRGGGARGGRGGSRDFGGGGRD. A compositionally biased stretch (basic and acidic residues) spans 806-817; the sequence is RGGRSGGRDFGG. Residues 828–845 show a composition bias toward basic residues; that stretch reads GGKRGGGRGGGGKRGRGR.

It belongs to the DEAD box helicase family. DDX54/DBP10 subfamily.

The enzyme catalyses ATP + H2O = ADP + phosphate + H(+). This chain is Putative DEAD-box ATP-dependent RNA helicase 29 (RH29), found in Arabidopsis thaliana (Mouse-ear cress).